The chain runs to 494 residues: UDP-N-acetylmuramoyl-L-alanyl-D-glutamate--L-lysine ligase (494 aa).

Ser-30 is a binding site for UDP-N-acetyl-alpha-D-muramoyl-L-alanyl-D-glutamate. Gly-110–Ser-116 serves as a coordination point for ATP. UDP-N-acetyl-alpha-D-muramoyl-L-alanyl-D-glutamate contacts are provided by residues Thr-152 to Thr-153, Ser-179, and Arg-187. Lys-219 carries the N6-carboxylysine modification. An L-lysine recognition motif motif is present at residues Asp-406–Ala-409.

Belongs to the MurCDEF family. MurE subfamily. Carboxylation is probably crucial for Mg(2+) binding and, consequently, for the gamma-phosphate positioning of ATP.

Its subcellular location is the cytoplasm. The enzyme catalyses UDP-N-acetyl-alpha-D-muramoyl-L-alanyl-D-glutamate + L-lysine + ATP = UDP-N-acetyl-alpha-D-muramoyl-L-alanyl-gamma-D-glutamyl-L-lysine + ADP + phosphate + H(+). Its pathway is cell wall biogenesis; peptidoglycan biosynthesis. Functionally, catalyzes the addition of L-lysine to the nucleotide precursor UDP-N-acetylmuramoyl-L-alanyl-D-glutamate (UMAG) in the biosynthesis of bacterial cell-wall peptidoglycan. This is UDP-N-acetylmuramoyl-L-alanyl-D-glutamate--L-lysine ligase from Staphylococcus aureus (strain Mu3 / ATCC 700698).